Consider the following 180-residue polypeptide: dCTP deaminase, dUMP-forming (180 aa).

DCTP contacts are provided by residues 100-105 (RSSLGR), Asp-117, 125-127 (TLE), Gln-146, Tyr-160, and Gln-167. Catalysis depends on Glu-127, which acts as the Proton donor/acceptor.

This sequence belongs to the dCTP deaminase family. Homotrimer.

The catalysed reaction is dCTP + 2 H2O = dUMP + NH4(+) + diphosphate. The protein operates within pyrimidine metabolism; dUMP biosynthesis; dUMP from dCTP: step 1/1. Its function is as follows. Bifunctional enzyme that catalyzes both the deamination of dCTP to dUTP and the hydrolysis of dUTP to dUMP without releasing the toxic dUTP intermediate. The polypeptide is dCTP deaminase, dUMP-forming (Persephonella marina (strain DSM 14350 / EX-H1)).